Consider the following 423-residue polypeptide: Serine hydroxymethyltransferase (423 aa).

(6S)-5,6,7,8-tetrahydrofolate contacts are provided by residues leucine 120 and 124–126 (GHL). Position 229 is an N6-(pyridoxal phosphate)lysine (lysine 229). 353 to 355 (SPF) contacts (6S)-5,6,7,8-tetrahydrofolate.

It belongs to the SHMT family. As to quaternary structure, homodimer. Pyridoxal 5'-phosphate serves as cofactor.

It is found in the cytoplasm. The enzyme catalyses (6R)-5,10-methylene-5,6,7,8-tetrahydrofolate + glycine + H2O = (6S)-5,6,7,8-tetrahydrofolate + L-serine. The protein operates within one-carbon metabolism; tetrahydrofolate interconversion. It participates in amino-acid biosynthesis; glycine biosynthesis; glycine from L-serine: step 1/1. In terms of biological role, catalyzes the reversible interconversion of serine and glycine with tetrahydrofolate (THF) serving as the one-carbon carrier. This reaction serves as the major source of one-carbon groups required for the biosynthesis of purines, thymidylate, methionine, and other important biomolecules. Also exhibits THF-independent aldolase activity toward beta-hydroxyamino acids, producing glycine and aldehydes, via a retro-aldol mechanism. The chain is Serine hydroxymethyltransferase from Prochlorococcus marinus (strain MIT 9301).